The primary structure comprises 130 residues: Small ribosomal subunit protein uS9 (130 aa).

It belongs to the universal ribosomal protein uS9 family.

The polypeptide is Small ribosomal subunit protein uS9 (Bordetella bronchiseptica (strain ATCC BAA-588 / NCTC 13252 / RB50) (Alcaligenes bronchisepticus)).